We begin with the raw amino-acid sequence, 262 residues long: Pyridoxine 5'-phosphate synthase (262 aa).

Asn-6 serves as a coordination point for 3-amino-2-oxopropyl phosphate. 8 to 9 lines the 1-deoxy-D-xylulose 5-phosphate pocket; sequence DH. Arg-17 is a binding site for 3-amino-2-oxopropyl phosphate. The Proton acceptor role is filled by His-41. 1-deoxy-D-xylulose 5-phosphate-binding residues include Arg-43 and His-48. Residue Glu-68 is the Proton acceptor of the active site. 1-deoxy-D-xylulose 5-phosphate is bound at residue Thr-98. Catalysis depends on His-210, which acts as the Proton donor. Residues Gly-211 and 232 to 233 each bind 3-amino-2-oxopropyl phosphate; that span reads GQ.

It belongs to the PNP synthase family. Homooctamer; tetramer of dimers.

The protein localises to the cytoplasm. The catalysed reaction is 3-amino-2-oxopropyl phosphate + 1-deoxy-D-xylulose 5-phosphate = pyridoxine 5'-phosphate + phosphate + 2 H2O + H(+). It participates in cofactor biosynthesis; pyridoxine 5'-phosphate biosynthesis; pyridoxine 5'-phosphate from D-erythrose 4-phosphate: step 5/5. Its function is as follows. Catalyzes the complicated ring closure reaction between the two acyclic compounds 1-deoxy-D-xylulose-5-phosphate (DXP) and 3-amino-2-oxopropyl phosphate (1-amino-acetone-3-phosphate or AAP) to form pyridoxine 5'-phosphate (PNP) and inorganic phosphate. The sequence is that of Pyridoxine 5'-phosphate synthase from Campylobacter jejuni subsp. jejuni serotype O:23/36 (strain 81-176).